The following is a 307-amino-acid chain: Thymidylate synthase (307 aa).

Position 44 (R44) interacts with dUMP. S108 carries the post-translational modification Phosphoserine. DUMP-binding positions include 169-170 (RR), 189-190 (CH), 209-212 (RSGD), N220, and 250-252 (HIY). Catalysis depends on C189, which acts as the Nucleophile. D212 is a (6R)-5,10-methylene-5,6,7,8-tetrahydrofolate binding site. Glycyl lysine isopeptide (Lys-Gly) (interchain with G-Cter in SUMO2) cross-links involve residues K286 and K302. Residue A306 participates in (6R)-5,10-methylene-5,6,7,8-tetrahydrofolate binding.

This sequence belongs to the thymidylate synthase family. In terms of assembly, homodimer.

The protein resides in the nucleus. Its subcellular location is the cytoplasm. It localises to the mitochondrion. The protein localises to the mitochondrion matrix. It is found in the mitochondrion inner membrane. It catalyses the reaction dUMP + (6R)-5,10-methylene-5,6,7,8-tetrahydrofolate = 7,8-dihydrofolate + dTMP. It functions in the pathway pyrimidine metabolism; dTTP biosynthesis. Its function is as follows. Catalyzes the reductive methylation of 2'-deoxyuridine 5'-monophosphate (dUMP) to thymidine 5'-monophosphate (dTMP), using the cosubstrate, 5,10- methylenetetrahydrofolate (CH2H4folate) as a 1-carbon donor and reductant and contributes to the de novo mitochondrial thymidylate biosynthesis pathway. In Mus musculus (Mouse), this protein is Thymidylate synthase (Tyms).